Consider the following 303-residue polypeptide: Probable 5-dehydro-4-deoxyglucarate dehydratase (303 aa).

It belongs to the DapA family.

It catalyses the reaction 5-dehydro-4-deoxy-D-glucarate + H(+) = 2,5-dioxopentanoate + CO2 + H2O. Its pathway is carbohydrate acid metabolism; D-glucarate degradation; 2,5-dioxopentanoate from D-glucarate: step 2/2. This is Probable 5-dehydro-4-deoxyglucarate dehydratase from Paracidovorax citrulli (strain AAC00-1) (Acidovorax citrulli).